A 191-amino-acid chain; its full sequence is Cell number regulator 1 (191 aa).

The disordered stretch occupies residues 13 to 44 (FSAGAPPTAPPPPAAYHQQQQQHGANMDTSRP). A compositionally biased stretch (low complexity) spans 27 to 37 (AYHQQQQQHGA). The helical transmembrane segment at 91 to 113 (IASGLVYGLICASTGMGCLYSCL) threads the bilayer.

Belongs to the cornifelin family. As to expression, expressed in roots, coleoptiles, stalks and silks. Detected in leaves, apical meristems, immature ears and pericarps. Highest expression in coleoptiles and silks.

It localises to the membrane. In terms of biological role, acts as a negative regulator of cell number. In Zea mays (Maize), this protein is Cell number regulator 1 (CNR1).